Consider the following 710-residue polypeptide: F-box only protein 40 (710 aa).

Residues 53–114 (EHTLLCPLEQ…VDSETFLHEN (62 aa)) form a TRAF-type zinc finger. 2 disordered regions span residues 152-174 (DATE…GAVG) and 234-279 (GSLG…SQEL). Over residues 238-248 (KSEDKNGDVAG) the composition is skewed to basic and acidic residues. The F-box domain occupies 572–626 (LNSLTSLPLEVLQYIAGFLDSISLSQLSQVSVLMRNICATLLQERGMVLSQWKKK).

In terms of assembly, directly interacts with SKP1 and CUL1. In terms of tissue distribution, expressed only in heart and skeletal muscle.

Its subcellular location is the cytoplasm. In terms of biological role, probable substrate-recognition component of the SCF (SKP1-CUL1-F-box protein)-type E3 ubiquitin ligase complex that may function in myogenesis. This is F-box only protein 40 (Fbxo40) from Mus musculus (Mouse).